The sequence spans 496 residues: Probable G-protein coupled receptor K01A12.3 (496 aa).

The Extracellular segment spans residues 1–19 (MESVTRHRADMISFFTFDS). A helical transmembrane segment spans residues 20–40 (YISIVGVAYTAVGLLGVFCNV). At 41 to 58 (TTVIMILTNRVFRLSAYT) the chain is on the cytoplasmic side. Residues 59 to 79 (IMANVALADSIVMLIAGVACG) form a helical membrane-spanning segment. Residues 80-128 (MDVMWPNPNDLTSFIPSLEEPYQKIAPVSLRNDSKTDSSAAGFETGNIH) lie on the Extracellular side of the membrane. Residue Asn111 is glycosylated (N-linked (GlcNAc...) asparagine). A helical transmembrane segment spans residues 129 to 149 (AVLSFSFVAAWTAGVISYAML). Residues 150–169 (GTNRCIAICYYGTKARALNQ) are Cytoplasmic-facing. Residues 170-190 (VSVAVACSASTWIVGIAAALV) traverse the membrane as a helical segment. The Extracellular portion of the chain corresponds to 191–216 (GTLSQPMIGIQRTMWSISFLEPRPHT). A helical membrane pass occupies residues 217-237 (TLFFTLLCAANLLGLGAQWVC). The Cytoplasmic segment spans residues 238–285 (STLVLLKIRQVKKKISKNKLNQNSANRFRKQVILALNEIIVTGNFKAR). The chain crosses the membrane as a helical span at residues 286–306 (LTFQFFYPSILCTISTFLFFI). The Extracellular portion of the chain corresponds to 307 to 318 (KPYAFEYLSGWQ). A helical transmembrane segment spans residues 319-339 (LVILHLLWLCNHTCNPFIYAY). Residues 340–496 (FNDRMRLTYK…WVKFAKKASI (157 aa)) are Cytoplasmic-facing. Residues 451–470 (TKELESAHNQGGSSRFDSER) form a disordered region.

Belongs to the G-protein coupled receptor 1 family.

It localises to the cell membrane. This is Probable G-protein coupled receptor K01A12.3 from Caenorhabditis elegans.